The primary structure comprises 501 residues: MESRLGWLTELQTETGANLRRTSIIGTIGPKTNNPETLVALRKAGLNIVRMNFSHGSYEYHQSVIDNARKSEELYPGRPLAIALDTKGPEIRTGTTTNEVDYPIPPNHEMIFSIDDKYAKACDDKVMYIDYKNITKVIEKGKIIYVDDGVLSFEVLEVVDEQTLKVKSLNAGKICSHKGVNLPGTDVDLPALSEKDKSDLRFGVKNGVHMVFASFIRTAQDVLTIREVLGEDGKDVKIIVKIENQQGVNNFDEILKVTDGVMVARGDLGIEIPAPQVFAVQKKLIAKCNLAGKPVICATQMLESMTYNPRPTRAEVSDVGNAVLDGADCVMLSGETAKGNYPINAVTIMAETALIAEQAIPYVATYDDLRNFTPKPTSTTETIAAAAVSSVFEQKAKAIIVLSTTGDTPRLVSKYKPNVPIVMVTRNPRAARFSHLYRGVFPFVYESDTESEWTKDVESRLNFGIAKAKEFGMLKEGDTIVTIQGFAAGVGHSNTLRVLTV.

R50 is a binding site for substrate. 4 residues coordinate K(+): N52, S54, D85, and T86. 52–55 (NFSH) provides a ligand contact to ATP. ATP-binding residues include R92 and K178. A Mg(2+)-binding site is contributed by E243. Substrate-binding residues include G266, D267, and T299. D267 contributes to the Mg(2+) binding site.

It belongs to the pyruvate kinase family. In terms of assembly, homotetramer. The cofactor is Mg(2+). It depends on K(+) as a cofactor.

It catalyses the reaction pyruvate + ATP = phosphoenolpyruvate + ADP + H(+). It participates in carbohydrate degradation; glycolysis; pyruvate from D-glyceraldehyde 3-phosphate: step 5/5. This is Pyruvate kinase (PYK1) from Lachancea kluyveri (strain ATCC 58438 / CBS 3082 / BCRC 21498 / NBRC 1685 / JCM 7257 / NCYC 543 / NRRL Y-12651) (Yeast).